Here is a 284-residue protein sequence, read N- to C-terminus: Tropomyosin (284 aa).

Residues 1-284 (MDAIKKKMLM…DQALNELHNM (284 aa)) are a coiled coil. Disordered stretches follow at residues 106 to 134 (LNST…ENRQ) and 186 to 221 (AETK…EEAY). 2 stretches are compositionally biased toward basic and acidic residues: residues 112–134 (KLTD…ENRQ) and 186–198 (AETK…DELK).

The protein belongs to the tropomyosin family. As to quaternary structure, homodimer.

In terms of biological role, tropomyosin, in association with the troponin complex, plays a central role in the calcium dependent regulation of muscle contraction. The sequence is that of Tropomyosin (TPM) from Branchiostoma belcheri (Amphioxus).